We begin with the raw amino-acid sequence, 95 residues long: Fungal defensin plectasin (95 aa).

Positions 1-23 (MQFTTILSIGITVFGLLNTGAFA) are cleaved as a signal peptide. The propeptide occupies 24 to 55 (APQPVPEAYAVSDPEAHPDDFAGMDANQLQKR). Beta-D-GlcNAc-(1-&gt;4)-Mur2Ac(oyl-L-Ala-gamma-D-Glu-L-Lys-D-Ala-D-Ala)-di-trans,octa-cis-undecaprenyl diphosphate contacts are provided by phenylalanine 57, glycine 58, and cysteine 59. Cystine bridges form between cysteine 59–cysteine 85, cysteine 70–cysteine 92, and cysteine 74–cysteine 94. A binds to membrane interface region spans residues 61–64 (GPWD). Beta-D-GlcNAc-(1-&gt;4)-Mur2Ac(oyl-L-Ala-gamma-D-Glu-L-Lys-D-Ala-D-Ala)-di-trans,octa-cis-undecaprenyl diphosphate contacts are provided by aspartate 67, histidine 73, tyrosine 84, alanine 86, glycine 88, cysteine 92, and lysine 93. The binds to membrane interface stretch occupies residues 86–92 (AKGGFVC).

The protein belongs to the invertebrate defensin family. Type 2 subfamily.

It is found in the secreted. The protein resides in the host cell membrane. Its function is as follows. Antimicrobial peptide that potently acts against several species of Gram-positive bacteria. It selectively inhibits peptidoglycan biosynthesis through complex formation with the cell wall precursor lipid II (1:1 molar ratio) thus inhibiting cell wall synthesis. It does not disrupt cell membranes. Is especially active against numerous clinical isolates of S.pneumoniae, including all 90 different serotypes and isolates resistant to clinically used antibiotics. In vitro, shows considerable selectivity for bacteria over mammalian cells. The peptide synthesized in D-amino acids does not show antibacterial activity. In vitro, acts on voltage-gated potassium channels by moderately inhibiting mammalian Kv1.3/KCNA3 (IC(50)=2.8 uM), and moderately inhibiting others potassium channels. This is Fungal defensin plectasin (DEF) from Pseudoplectania nigrella (Ebony cup).